Reading from the N-terminus, the 112-residue chain is Large ribosomal subunit protein uL22 (112 aa).

This sequence belongs to the universal ribosomal protein uL22 family. Part of the 50S ribosomal subunit.

This protein binds specifically to 23S rRNA; its binding is stimulated by other ribosomal proteins, e.g. L4, L17, and L20. It is important during the early stages of 50S assembly. It makes multiple contacts with different domains of the 23S rRNA in the assembled 50S subunit and ribosome. Functionally, the globular domain of the protein is located near the polypeptide exit tunnel on the outside of the subunit, while an extended beta-hairpin is found that lines the wall of the exit tunnel in the center of the 70S ribosome. The chain is Large ribosomal subunit protein uL22 from Sulfurovum sp. (strain NBC37-1).